The primary structure comprises 432 residues: Homogentisate 1,2-dioxygenase (432 aa).

H286 serves as the catalytic Proton acceptor. Fe cation is bound by residues H329 and E335. Homogentisate is bound by residues Y344 and H365. H365 lines the Fe cation pocket.

Belongs to the homogentisate dioxygenase family. As to quaternary structure, hexamer; dimer of trimers. Requires Fe cation as cofactor.

The enzyme catalyses homogentisate + O2 = 4-maleylacetoacetate + H(+). It participates in amino-acid degradation; L-phenylalanine degradation; acetoacetate and fumarate from L-phenylalanine: step 4/6. In terms of biological role, involved in the catabolism of homogentisate (2,5-dihydroxyphenylacetate or 2,5-OH-PhAc), a central intermediate in the degradation of phenylalanine and tyrosine. Catalyzes the oxidative ring cleavage of the aromatic ring of homogentisate to yield maleylacetoacetate. The protein is Homogentisate 1,2-dioxygenase of Bordetella bronchiseptica (strain ATCC BAA-588 / NCTC 13252 / RB50) (Alcaligenes bronchisepticus).